A 76-amino-acid chain; its full sequence is U1-cyrtautoxin-As1d (76 aa).

Cystine bridges form between Cys-23–Cys-37, Cys-30–Cys-51, Cys-36–Cys-66, and Cys-69–Cys-76.

The protein belongs to the neurotoxin 21 family. Expressed by the venom gland.

It is found in the secreted. Functionally, neurotoxin with probable ion channel impairing activity. In vivo, is both paralytic and lethal, when injected into lepidopteran larvae. The protein is U1-cyrtautoxin-As1d of Apomastus schlingeri (Trap-door spider).